The chain runs to 379 residues: Succinyl-diaminopimelate desuccinylase (379 aa).

A Zn(2+)-binding site is contributed by His70. The active site involves Asp72. Residue Asp103 coordinates Zn(2+). Catalysis depends on Glu137, which acts as the Proton acceptor. Positions 138, 166, and 352 each coordinate Zn(2+).

This sequence belongs to the peptidase M20A family. DapE subfamily. Homodimer. The cofactor is Zn(2+). Co(2+) serves as cofactor.

It carries out the reaction N-succinyl-(2S,6S)-2,6-diaminopimelate + H2O = (2S,6S)-2,6-diaminopimelate + succinate. It functions in the pathway amino-acid biosynthesis; L-lysine biosynthesis via DAP pathway; LL-2,6-diaminopimelate from (S)-tetrahydrodipicolinate (succinylase route): step 3/3. Catalyzes the hydrolysis of N-succinyl-L,L-diaminopimelic acid (SDAP), forming succinate and LL-2,6-diaminopimelate (DAP), an intermediate involved in the bacterial biosynthesis of lysine and meso-diaminopimelic acid, an essential component of bacterial cell walls. This Burkholderia lata (strain ATCC 17760 / DSM 23089 / LMG 22485 / NCIMB 9086 / R18194 / 383) protein is Succinyl-diaminopimelate desuccinylase.